The chain runs to 480 residues: MSENLQLSAEEMRQLGYQAVDLIIDHMNHLKSKPVSETIDSDILRNKLTESIPENGSDPKELLHFLNRNVFNQITHVDHPHFLAFVPGPNNYVGVVADFLASGFNVFPTAWIAGAGAEQIELTTINWLKSMLGFPDSAEGLFVSGGSMANLTALTVARQAKLNNDIENAVVYFSDQTHFSVDRALKVLGFKHHQICRIETDEHLRISVSALKKQIKEDRTKGKKPFCVIANAGTTNCGAVDSLNELADLCNDEDVWLHADGSYGAPAILSEKGSAMLQGIHRADSLTLDPHKWLFQPYDVGCVLIRNSQYLSKTFRMMPEYIKDSETNVEGEINFGECGIELSRRFRALKVWLSFKVFGVAAFRQAIDHGIMLAEQVEAFLGKAKDWEVVTPAQLGIVTFRYIPSELASTDTINEINKKLVKEITHRGFAMLSTTELKEKVVIRLCSINPRTTTEEMLQIMMKIKALAEEVSISYPCVAE.

At K292 the chain carries N6-(pyridoxal phosphate)lysine.

The protein belongs to the group II decarboxylase family. Pyridoxal 5'-phosphate serves as cofactor.

The catalysed reaction is L-tryptophan + H(+) = tryptamine + CO2. It carries out the reaction L-phenylalanine + H(+) = 2-phenylethylamine + CO2. The enzyme catalyses 5-hydroxy-L-tryptophan + H(+) = serotonin + CO2. It catalyses the reaction L-dopa + H(+) = dopamine + CO2. Its function is as follows. Involved in bacillamide C biosynthesis. Catalyzes the decarboxylation of L-tryptophan to tryptamine. The tryptamine obtained is then probably incorporated into the bacillamide C peptide, which is derived from the amino acids alanine, cysteine and tryptophan through nonribosomal peptide synthetase (NRPS) biosynthesis strategy. L-tryptophan is the best substrate, but the enzyme displays broad substrate specificity for various aromatic amino acids in vitro and it can also catalyze the decarboxylation of L-phenylalanine, 5-hydroxy-L-tryptophan (L-HTP) and L-DOPA, with lower efficiency. Exhibits weak activity with L-tyrosine. The chain is Aromatic-L-amino-acid decarboxylase from Bacillus atrophaeus.